Here is a 417-residue protein sequence, read N- to C-terminus: UDP-N-acetylglucosamine 1-carboxyvinyltransferase (417 aa).

Phosphoenolpyruvate is bound at residue 23-24 (KN). Residue R93 coordinates UDP-N-acetyl-alpha-D-glucosamine. D117 acts as the Proton donor in catalysis. Residues D305 and V327 each contribute to the UDP-N-acetyl-alpha-D-glucosamine site.

It belongs to the EPSP synthase family. MurA subfamily.

The protein resides in the cytoplasm. It catalyses the reaction phosphoenolpyruvate + UDP-N-acetyl-alpha-D-glucosamine = UDP-N-acetyl-3-O-(1-carboxyvinyl)-alpha-D-glucosamine + phosphate. The protein operates within cell wall biogenesis; peptidoglycan biosynthesis. In terms of biological role, cell wall formation. Adds enolpyruvyl to UDP-N-acetylglucosamine. In Mycolicibacterium paratuberculosis (strain ATCC BAA-968 / K-10) (Mycobacterium paratuberculosis), this protein is UDP-N-acetylglucosamine 1-carboxyvinyltransferase.